We begin with the raw amino-acid sequence, 374 residues long: DNA replication and repair protein RecF (374 aa).

30–37 (GENAQGKT) is an ATP binding site.

It belongs to the RecF family.

Its subcellular location is the cytoplasm. In terms of biological role, the RecF protein is involved in DNA metabolism; it is required for DNA replication and normal SOS inducibility. RecF binds preferentially to single-stranded, linear DNA. It also seems to bind ATP. The sequence is that of DNA replication and repair protein RecF from Lactiplantibacillus plantarum (strain ATCC BAA-793 / NCIMB 8826 / WCFS1) (Lactobacillus plantarum).